A 101-amino-acid chain; its full sequence is uncharacterized protein (101 aa).

The disordered stretch occupies residues 39 to 74 (CDERHGRPLPHSQESQHGSATSKKAVRGTADTAPLE). The span at 50–60 (SQESQHGSATS) shows a compositional bias: polar residues.

This is an uncharacterized protein from Homo sapiens (Human).